Consider the following 1098-residue polypeptide: Beta-alanine-activating enzyme (1098 aa).

Residues 198–206, Asp428, Arg442, and Lys527 each bind ATP; that span reads TSGTTGIPK. Residues 553–630 form the Carrier domain; that stretch reads EDLWEKLQYL…EIYNHILQTV (78 aa). Ser589 is modified (O-(pantetheine 4'-phosphoryl)serine). 2 positions are modified to phosphoserine: Ser649 and Ser724.

The protein belongs to the ATP-dependent AMP-binding enzyme family. As to expression, ubiquitously expressed in adult tissues.

In terms of biological role, covalently binds beta-alanine in an ATP-dependent manner to form a thioester bond with its phosphopantetheine group and transfers it to an, as yet, unknown acceptor. May be required for a post-translational protein modification or for post-transcriptional modification of an RNA. The chain is Beta-alanine-activating enzyme (AASDH) from Homo sapiens (Human).